The chain runs to 780 residues: Aconitate hydratase, mitochondrial (780 aa).

A mitochondrion-targeting transit peptide spans 1-27; that stretch reads MAPYSLLVTRLQKALGVRQYHVASVLC. Position 31 is an N6-succinyllysine (Lys31). Residue Lys50 is modified to N6-acetyllysine; alternate. At Lys50 the chain carries N6-succinyllysine; alternate. Gln99 contacts substrate. 2 positions are modified to N6-acetyllysine; alternate: Lys138 and Lys144. 2 positions are modified to N6-succinyllysine; alternate: Lys138 and Lys144. 192–194 serves as a coordination point for substrate; sequence DSH. An N6-acetyllysine; alternate modification is found at Lys233. Lys233 carries the N6-succinyllysine; alternate modification. [4Fe-4S] cluster is bound at residue Cys385. Lys411 carries the N6-succinyllysine modification. [4Fe-4S] cluster is bound by residues Cys448 and Cys451. Arg474 and Arg479 together coordinate substrate. Lys517 and Lys523 each carry N6-acetyllysine; alternate. 2 positions are modified to N6-succinyllysine; alternate: Lys517 and Lys523. Residues 524–537 show a composition bias toward basic and acidic residues; the sequence is LEAPDADELPRSDF. Residues 524-560 form a disordered region; sequence LEAPDADELPRSDFDPGQDTYQHPPKDSSGQRVDVSP. Lys549 is subject to N6-succinyllysine. Over residues 551–560 the composition is skewed to polar residues; the sequence is SSGQRVDVSP. Ser559 is subject to Phosphoserine. Residue Lys573 is modified to N6-acetyllysine; alternate. An N6-succinyllysine; alternate modification is found at Lys573. Lys577 and Lys591 each carry N6-succinyllysine. The residue at position 605 (Lys605) is an N6-acetyllysine; alternate. Residue Lys605 is modified to N6-succinyllysine; alternate. Arg607 is a substrate binding site. Residue Lys628 is modified to N6-succinyllysine. Phosphoserine is present on Ser670. 670–671 is a substrate binding site; sequence SR. N6-succinyllysine is present on Lys689. Residues Lys723 and Lys730 each carry the N6-acetyllysine; alternate modification. N6-succinyllysine; alternate occurs at positions 723 and 730. 3 positions are modified to N6-acetyllysine: Lys736, Lys739, and Lys743.

It belongs to the aconitase/IPM isomerase family. Monomer. It depends on [4Fe-4S] cluster as a cofactor. Post-translationally, forms covalent cross-links mediated by transglutaminase TGM2, between a glutamine and the epsilon-amino group of a lysine residue, forming homopolymers and heteropolymers.

The protein localises to the mitochondrion. The catalysed reaction is citrate = D-threo-isocitrate. It functions in the pathway carbohydrate metabolism; tricarboxylic acid cycle; isocitrate from oxaloacetate: step 2/2. In terms of biological role, catalyzes the isomerization of citrate to isocitrate via cis-aconitate. The sequence is that of Aconitate hydratase, mitochondrial (Aco2) from Mus musculus (Mouse).